We begin with the raw amino-acid sequence, 315 residues long: GTP cyclohydrolase MptA (315 aa).

The protein belongs to the GTP cyclohydrolase IV family. Homodimer. Fe(2+) is required as a cofactor.

It catalyses the reaction GTP + H2O = 7,8-dihydroneopterin 2',3'-cyclic phosphate + formate + diphosphate + H(+). It participates in cofactor biosynthesis; 5,6,7,8-tetrahydromethanopterin biosynthesis. Its function is as follows. Converts GTP to 7,8-dihydro-D-neopterin 2',3'-cyclic phosphate, the first intermediate in the biosynthesis of coenzyme methanopterin. The sequence is that of GTP cyclohydrolase MptA from Methanococcus maripaludis (strain DSM 14266 / JCM 13030 / NBRC 101832 / S2 / LL).